The chain runs to 373 residues: P2Y purinoceptor 1 (373 aa).

At 1–51 the chain is on the extracellular side; it reads MTEVLWPAVPNGTDTAFLADPGSPWGNSTVTSTAAVASPFKCALTKTGFQF. Asn11 and Asn27 each carry an N-linked (GlcNAc...) asparagine glycan. Intrachain disulfides connect Cys42-Cys296 and Cys124-Cys202. Residue Lys46 coordinates ADP. The helical transmembrane segment at 52–74 threads the bilayer; that stretch reads YYLPAVYILVFIIGFLGNSVAIW. Over 75-87 the chain is Cytoplasmic; it reads MFVFHMKPWSGIS. Residues 88–109 form a helical membrane-spanning segment; sequence VYMFNLALADFLYVLTLPALIF. Over 110–125 the chain is Extracellular; that stretch reads YYFNKTDWIFGDAMCK. N-linked (GlcNAc...) asparagine glycosylation occurs at Asn113. The helical transmembrane segment at 126–147 threads the bilayer; sequence LQRFIFHVNLYGSILFLTCISA. The Cytoplasmic segment spans residues 148-166; that stretch reads HRYSGVVYPLKSLGRLKKK. Residues 167–188 traverse the membrane as a helical segment; the sequence is NAVYISVLVWLIVVVGISPILF. Topologically, residues 189–214 are extracellular; the sequence is YSGTGIRKNKTITCYDTTSDEYLRSY. N-linked (GlcNAc...) asparagine glycosylation occurs at Asn197. 203 to 205 is an ADP binding site; that stretch reads YDT. Residues 215-237 traverse the membrane as a helical segment; it reads FIYSMCTTVAMFCVPLVLILGCY. At 238–260 the chain is on the cytoplasmic side; sequence GLIVRALIYKDLDNSPLRRKSIY. A helical membrane pass occupies residues 261–284; the sequence is LVIIVLTVFAVSYIPFHVMKTMNL. ADP contacts are provided by residues 283–287, 303–306, and Arg310; these read NLRAR and YATY. Over 285–303 the chain is Extracellular; sequence RARLDFQTPEMCAFNDRVY. A helical transmembrane segment spans residues 304 to 325; it reads ATYQVTRGLASLNSCVDPILYF. Topologically, residues 326-373 are cytoplasmic; that stretch reads LAGDTFRRRLSRATRKASRRSEANLQSKSEDMTLNILSEFKQNGDTSL.

This sequence belongs to the G-protein coupled receptor 1 family.

The protein resides in the cell membrane. In terms of biological role, receptor for extracellular adenine nucleotides such as ADP. In platelets, binding to ADP leads to mobilization of intracellular calcium ions via activation of phospholipase C, a change in platelet shape, and ultimately platelet aggregation. The polypeptide is P2Y purinoceptor 1 (P2RY1) (Bos taurus (Bovine)).